We begin with the raw amino-acid sequence, 643 residues long: E3 ubiquitin-protein ligase AMFR (643 aa).

Positions 39–67 are disordered; it reads PEAGPGEPDQLTASLQPEPPAPARPSAGG. The next 6 membrane-spanning stretches (helical) occupy residues 82–102, 122–142, 145–165, 186–206, 215–235, and 276–296; these read LFVWVLVNTACCVLMLVAKLI, FWNFIFYKFIFIFGVLNVQTV, VVMWCLWFAGLVFLHLMVQLC, VLSLLVAMLLSCCGLAAVCSI, TLAFMAAESLLVTVRTAHVIL, and HIHMLLFGNIWLSMASLVIFM. The RING-type zinc-finger motif lies at 341–379; the sequence is CAICWDSMQAARKLPCGHLFHNSCLRSWLEQDTSCPTCR. Residues 429–449 traverse the membrane as a helical segment; sequence IASWLPSFSVEVMHTTNILGI. The region spanning 456–498 is the CUE domain; sequence QLNAMAHQIQEMFPQVPYHLVLQDLQLTRSVEITTDNILEGRI. Disordered stretches follow at residues 504–579 and 596–624; these read TQRS…DERQ and RFLNKSSEDDAASESFLPSEGASSDPVTL. Residues Ser516, Ser523, and Ser542 each carry the phosphoserine modification. The segment covering 548–563 has biased composition (acidic residues); sequence TLDFGEVEVEPSEVED. Basic and acidic residues predominate over residues 564–579; that stretch reads FEARGSRFSKSADERQ. The VCP/p97-interacting motif (VIM) stretch occupies residues 622-640; sequence VTLRRRMLAAAAERRLQKQ.

As to quaternary structure, interacts with RNF5. Also forms an ERAD complex containing VCP/p97, NGLY1; PSMC1; SAKS1 and RAD23B required for coupling retrotranslocation, ubiquitination and deglycosylation. Interacts with DERL1. Interacts (through a region distinct from the RING finger) with UBE2G2/UBC7. Component of the VCP/p97-AMFR/gp78 complex that enhances VCP/p97 binding to polyubiquitinated proteins for their degradation by the endoplasmic reticulum-associated degradation (ERAD) pathway. Interacts (via the VIM) with VCP/p97. Interacts (via its membrane domain) with INSIG1; the interaction initiates the sterol-mediated ubiquitination and degradation of HMGCR by the ERAD pathway. Interacts with AUP1, UBE2G2 and RNF139/TRC8; interaction with AUP1 facilitates interaction of AMFR with ubiquitin-conjugating enzyme UBE2G2 and ubiquitin ligase RNF139, leading to sterol-induced ubiquitination of HMGCR and its subsequent proteasomal degradation. Interacts with BAG6. Interacts with USP13 (via UBA 2 domain); the interaction is direct. Interacts with LMBR1L. Interacts with UBAC2 and CTNNB1. Interacts with C18orf32. In terms of assembly, (Microbial infection) Interacts with Staphylococcus aureus HIgB; this interaction regulates AMFR-mediated inflammation by promoting TAB3 ubiquitination to promote TAB3-TAK1 complex formation. In terms of processing, palmitoylation of the RING-type zing finger by ZDHHC6 promotes localization to the peripheral endoplasmic reticulum. In terms of tissue distribution, widely expressed.

It localises to the endoplasmic reticulum membrane. It carries out the reaction [E2 ubiquitin-conjugating enzyme]-S-ubiquitinyl-L-cysteine + [acceptor protein]-L-cysteine = [E2 ubiquitin-conjugating enzyme]-L-cysteine + [acceptor protein]-S-ubiquitinyl-L-cysteine.. It participates in protein modification; protein ubiquitination. E3 ubiquitin-protein ligase that mediates the polyubiquitination of lysine and cysteine residues on target proteins, such as CD3D, CYP3A4, CFTR, INSIG1, SOAT2/ACAT2 and APOB for proteasomal degradation. Component of a VCP/p97-AMFR/gp78 complex that participates in the final step of endoplasmic reticulum-associated degradation (ERAD). The VCP/p97-AMFR/gp78 complex is involved in the sterol-accelerated ERAD degradation of HMGCR through binding to the HMGCR-INSIG1 complex at the ER membrane. In addition, interaction of AMFR with AUP1 facilitates interaction of AMFR with ubiquitin-conjugating enzyme UBE2G2 and ubiquitin ligase RNF139, leading to sterol-induced HMGCR ubiquitination. The ubiquitinated HMGCR is then released from the ER into the cytosol for subsequent destruction. In addition to ubiquitination on lysine residues, catalyzes ubiquitination on cysteine residues: together with INSIG1, mediates polyubiquitination of SOAT2/ACAT2 at 'Cys-277', leading to its degradation when the lipid levels are low. Catalyzes ubiquitination and subsequent degradation of INSIG1 when cells are depleted of sterols. Mediates polyubiquitination of INSIG2 at 'Cys-215' in some tissues, leading to its degradation. Also regulates ERAD through the ubiquitination of UBL4A a component of the BAG6/BAT3 complex. Also acts as a scaffold protein to assemble a complex that couples ubiquitination, retranslocation and deglycosylation. Mediates tumor invasion and metastasis as a receptor for the GPI/autocrine motility factor. In association with LMBR1L and UBAC2, negatively regulates the canonical Wnt signaling pathway in the lymphocytes by promoting the ubiquitin-mediated degradation of CTNNB1 and Wnt receptors FZD6 and LRP6. Regulates NF-kappa-B and MAPK signaling pathways by mediating 'Lys-27'-linked polyubiquitination of TAB3 and promoting subsequent TAK1/MAP3K7 activation. Required for proper lipid homeostasis. The polypeptide is E3 ubiquitin-protein ligase AMFR (Homo sapiens (Human)).